We begin with the raw amino-acid sequence, 209 residues long: Ribonuclease HII (209 aa).

Residues 5 to 202 (SMTLGIDEAG…KNRILNPKLL (198 aa)) enclose the RNase H type-2 domain. A divalent metal cation-binding residues include aspartate 11, glutamate 12, and aspartate 108.

This sequence belongs to the RNase HII family. It depends on Mn(2+) as a cofactor. The cofactor is Mg(2+).

The protein resides in the cytoplasm. It catalyses the reaction Endonucleolytic cleavage to 5'-phosphomonoester.. Functionally, endonuclease that specifically degrades the RNA of RNA-DNA hybrids. The sequence is that of Ribonuclease HII (rnhB) from Helicobacter pylori (strain J99 / ATCC 700824) (Campylobacter pylori J99).